A 648-amino-acid polypeptide reads, in one-letter code: Threonine--tRNA ligase (648 aa).

The TGS domain occupies methionine 1–threonine 63. The catalytic stretch occupies residues aspartate 247–proline 544. The Zn(2+) site is built by cysteine 344, histidine 395, and histidine 521.

This sequence belongs to the class-II aminoacyl-tRNA synthetase family. As to quaternary structure, homodimer. The cofactor is Zn(2+).

It is found in the cytoplasm. The catalysed reaction is tRNA(Thr) + L-threonine + ATP = L-threonyl-tRNA(Thr) + AMP + diphosphate + H(+). In terms of biological role, catalyzes the attachment of threonine to tRNA(Thr) in a two-step reaction: L-threonine is first activated by ATP to form Thr-AMP and then transferred to the acceptor end of tRNA(Thr). Also edits incorrectly charged L-seryl-tRNA(Thr). This chain is Threonine--tRNA ligase, found in Ruegeria sp. (strain TM1040) (Silicibacter sp.).